A 318-amino-acid polypeptide reads, in one-letter code: Homoserine kinase (318 aa).

Pro-97 to Cys-107 is a binding site for ATP.

This sequence belongs to the GHMP kinase family. Homoserine kinase subfamily.

The protein localises to the cytoplasm. The catalysed reaction is L-homoserine + ATP = O-phospho-L-homoserine + ADP + H(+). It participates in amino-acid biosynthesis; L-threonine biosynthesis; L-threonine from L-aspartate: step 4/5. Functionally, catalyzes the ATP-dependent phosphorylation of L-homoserine to L-homoserine phosphate. The protein is Homoserine kinase of Aliivibrio salmonicida (strain LFI1238) (Vibrio salmonicida (strain LFI1238)).